A 528-amino-acid chain; its full sequence is Protein phosphatase 1 regulatory subunit 16A (528 aa).

Residues 18 to 45 adopt a coiled-coil conformation; that stretch reads STQERLKHAQKRRAQQVKMWAQAEKEAQ. A disordered region spans residues 19–59; the sequence is TQERLKHAQKRRAQQVKMWAQAEKEAQGKKGPGERPRKEAA. A compositionally biased stretch (basic and acidic residues) spans 40 to 58; it reads AEKEAQGKKGPGERPRKEA. ANK repeat units follow at residues 70-99, 103-132, 136-165, 231-260, and 264-293; these read PPSV…SPDL, DGLT…NINA, ECWT…NLLA, HGAT…SLSA, and DGWE…DLNA. 2 disordered regions span residues 330-351 and 367-421; these read RQRS…VVRR and QEAI…SPVR. Position 433 is a phosphoserine (Ser433). The tract at residues 462 to 505 is disordered; that stretch reads QRAAAKLQRPPPEGPESPETAEPGLPGDTVTPQPDCGFRAGGDP. The S-palmitoyl cysteine moiety is linked to residue Cys524. At Cys525 the chain carries Cysteine methyl ester. Cys525 is lipidated: S-farnesyl cysteine. A propeptide spans 526 to 528 (removed in mature form); that stretch reads LLM.

Binds PP1.

Its subcellular location is the cell membrane. Inhibits protein phosphatase 1 activity toward phosphorylase, myosin light chain and myosin substrates. The polypeptide is Protein phosphatase 1 regulatory subunit 16A (PPP1R16A) (Homo sapiens (Human)).